A 406-amino-acid chain; its full sequence is Putative colanic acid biosynthesis glycosyltransferase WcaL (406 aa).

It belongs to the glycosyltransferase group 1 family. Glycosyltransferase 4 subfamily.

It functions in the pathway slime biogenesis; slime polysaccharide biosynthesis. This chain is Putative colanic acid biosynthesis glycosyltransferase WcaL (wcaL), found in Salmonella typhimurium (strain LT2 / SGSC1412 / ATCC 700720).